The following is a 676-amino-acid chain: tRNA uridine 5-carboxymethylaminomethyl modification enzyme MnmG (676 aa).

15–20 (GAGHAG) is a binding site for FAD. Position 316-330 (316-330 (GPRYCPSIEDKIVRF)) interacts with NAD(+).

This sequence belongs to the MnmG family. Homodimer. Heterotetramer of two MnmE and two MnmG subunits. The cofactor is FAD.

It is found in the cytoplasm. In terms of biological role, NAD-binding protein involved in the addition of a carboxymethylaminomethyl (cmnm) group at the wobble position (U34) of certain tRNAs, forming tRNA-cmnm(5)s(2)U34. The sequence is that of tRNA uridine 5-carboxymethylaminomethyl modification enzyme MnmG from Roseiflexus castenholzii (strain DSM 13941 / HLO8).